A 1068-amino-acid polypeptide reads, in one-letter code: Protein AF-10 (1068 aa).

Residues 22–74 (IGGCCVCSDERGWAENPLVYCDGHGCSVAVHQACYGIVQVPTGPWFCRKCESQ) form a PHD-type 1 zinc finger. The segment at 79–112 (RVRCELCPHKDGALKRTDNGGWAHVVCALYIPEV) adopts a C2HC pre-PHD-type zinc-finger fold. The segment at 80 to 287 (VRCELCPHKD…SLKRLEDTTA (208 aa)) is self-association. The segment at 106 to 190 (ALYIPEVQFA…EGNGADNVQY (85 aa)) is required for interaction with histone H3. Residues 135 to 198 (KTCYICDEQG…QYCGYCKYHF (64 aa)) form a PHD-type 2 zinc finger. The interaction with FSTL3 stretch occupies residues 141-233 (DEQGRESKAA…QDKHHEKEKK (93 aa)). Positions 206–260 (RGSNRSYDQSLSDSSSHSQDKHHEKEKKKYKEKDKHKQKHKKQPEPSPALVPSLT) are disordered. The segment covering 211-222 (SYDQSLSDSSSH) has biased composition (low complexity). Serine 217 is modified (phosphoserine). The span at 223 to 240 (SQDKHHEKEKKKYKEKDK) shows a compositional bias: basic and acidic residues. The residue at position 252 (serine 252) is a Phosphoserine. A Glycyl lysine isopeptide (Lys-Gly) (interchain with G-Cter in SUMO2) cross-link involves residue lysine 280. A compositionally biased stretch (polar residues) spans 291 to 305 (NANFQEVSAHTSSGK). The segment at 291-505 (NANFQEVSAH…SSASPTSSVA (215 aa)) is disordered. Positions 306–317 (DVSETRGSEGKG) are enriched in basic and acidic residues. Residues 311–674 (RGSEGKGKKS…QDLGDNSRNL (364 aa)) are DNA-binding. Residues 352-372 (SFSGTPGSVKSSSGSSVQSPQ) show a composition bias toward low complexity. 2 stretches are compositionally biased toward polar residues: residues 387–396 (YSHSQQSSAT) and 404–446 (SGSQ…SSLP). Residue serine 436 is modified to Phosphoserine. Positions 465-483 (EKKRKGNKQSKHGPGRPKG) are enriched in basic residues. Residues 490 to 505 (VSHLSVSSASPTSSVA) show a composition bias toward low complexity. Serine 532 is subject to Phosphoserine. The segment covering 583-594 (SGSGSSTPVSSS) has biased composition (low complexity). Disordered regions lie at residues 583 to 612 (SGSG…ALSP) and 660 to 708 (NNQT…SLEN). Composition is skewed to polar residues over residues 595-604 (HLPQQSSGHL) and 660-673 (NNQT…NSRN). The span at 674–694 (LVGRGSSPRGSLSPRSPVSSL) shows a compositional bias: low complexity. Phosphoserine occurs at positions 684, 686, and 689. The transactivation domain; required for DOT1L-binding stretch occupies residues 703 to 784 (NSSLENLPPV…NAQLSVPFPT (82 aa)). The tract at residues 750–778 (LQVENRRLEEQIKNLTAKKERLQLLNAQL) is leucine-zipper. Residues 800 to 814 (AQTAPTTDSLNSSKS) are compositionally biased toward polar residues. Positions 800 to 865 (AQTAPTTDSL…SPAQQGSGVS (66 aa)) are disordered. 2 stretches are compositionally biased toward low complexity: residues 834 to 848 (LTSS…SALS) and 855 to 865 (QSPAQQGSGVS).

Self-associates. Interacts with FSTL3 isoform 2; the interaction enhances MLLT10 in vitro transcriptional activity and self-association. Interacts with YEATS4. Interacts with SS18. Interacts with DOT1L; this interaction also occurs with the KMT2A/MLL1 fusion protein. Interacts with histone H3; interaction is necessary for MLLT10 binding to nucleosomes; interaction is inhibited by histone H3 'Lys-27' methylations (H3K27me1, H3K27me2 and H3K27me3) amd acetylation; interaction stabilizes association of MLLT10 at chromatin; interaction is essential for histone H3 'Lys-79' dimethylation (H3K79me2). In terms of tissue distribution, expressed abundantly in testis.

It is found in the nucleus. In terms of biological role, probably involved in transcriptional regulation. In vitro or as fusion protein with KMT2A/MLL1 has transactivation activity. Binds to cruciform DNA. In cells, binding to unmodified histone H3 regulates DOT1L functions including histone H3 'Lys-79' dimethylation (H3K79me2) and gene activation. The chain is Protein AF-10 from Homo sapiens (Human).